Here is a 468-residue protein sequence, read N- to C-terminus: Probable Xaa-Pro aminopeptidase PEPP (468 aa).

Mn(2+) is bound by residues aspartate 264, aspartate 275, glutamate 398, and glutamate 438.

The protein belongs to the peptidase M24B family. The cofactor is Mn(2+).

The enzyme catalyses Release of any N-terminal amino acid, including proline, that is linked to proline, even from a dipeptide or tripeptide.. Catalyzes the removal of a penultimate prolyl residue from the N-termini of peptides. This is Probable Xaa-Pro aminopeptidase PEPP (PEPP) from Ajellomyces dermatitidis (strain ER-3 / ATCC MYA-2586) (Blastomyces dermatitidis).